A 263-amino-acid chain; its full sequence is Phosphoinositide-3-kinase-interacting protein 1 (263 aa).

Residues 1 to 21 (MLLAWVQAFLVSNMLLAEAYG) form the signal peptide. Over 22-168 (SGGCFWDNGH…NSKEKKDLGT (147 aa)) the chain is Extracellular. The Kringle domain maps to 24–101 (GCFWDNGHLY…EKRPCEDLRC (78 aa)). Intrachain disulfides connect Cys-25-Cys-101, Cys-46-Cys-82, and Cys-70-Cys-96. A glycan (O-linked (GalNAc...) serine) is linked at Ser-39. N-linked (GlcNAc...) (complex) asparagine glycosylation is present at Asn-66. The chain crosses the membrane as a helical span at residues 169 to 189 (LGYVLGITMMVIIIAIGAGII). At 190–263 (LGYSYKRGKD…LMGQAGTPGA (74 aa)) the chain is on the cytoplasmic side. Residues 242-251 (QTPVDPQEGT) show a composition bias toward polar residues. Residues 242–263 (QTPVDPQEGTTPLMGQAGTPGA) are disordered.

N- and O-glycosylated. O-glycosylated with core 1 or possibly core 8 glycans. N-glycan heterogeneity at Asn-66: dHex1Hex5HexNAc4 (major) and dHex1Hex6HexNAc5 (minor).

Its subcellular location is the cell membrane. In terms of biological role, negative regulator of hepatic phosphatidylinositol 3-kinase (PI3K) activity. This chain is Phosphoinositide-3-kinase-interacting protein 1 (PIK3IP1), found in Homo sapiens (Human).